Reading from the N-terminus, the 426-residue chain is Probable alpha-galactosidase B (426 aa).

A signal peptide spans 1–13 (MSRSKTRQGKLPA). 2 disulfides stabilise this stretch: C24–C56 and C106–C136. D134 serves as the catalytic Nucleophile. N-linked (GlcNAc...) asparagine glycosylation is found at N141 and N159. 204 to 208 (EWGQA) provides a ligand contact to substrate. The N-linked (GlcNAc...) asparagine glycan is linked to N215. D226 serves as the catalytic Proton donor. N265 carries N-linked (GlcNAc...) asparagine glycosylation.

The protein belongs to the glycosyl hydrolase 27 family.

The protein resides in the secreted. The catalysed reaction is Hydrolysis of terminal, non-reducing alpha-D-galactose residues in alpha-D-galactosides, including galactose oligosaccharides, galactomannans and galactolipids.. Its function is as follows. Hydrolyzes a variety of simple alpha-D-galactoside as well as more complex molecules such as oligosaccharides and polysaccharides. The polypeptide is Probable alpha-galactosidase B (aglB) (Aspergillus fumigatus (strain CBS 144.89 / FGSC A1163 / CEA10) (Neosartorya fumigata)).